Here is a 412-residue protein sequence, read N- to C-terminus: FAD-dependent monooxygenase nscC (412 aa).

An N-terminal signal peptide occupies residues 1–21; that stretch reads MGKQQETILIIGAGIAGLTTS. The FAD site is built by glutamate 35 and alanine 46. N-linked (GlcNAc...) asparagine glycosylation occurs at asparagine 92. Residue arginine 119 participates in FAD binding. N-linked (GlcNAc...) asparagine glycosylation is found at asparagine 170 and asparagine 231. Residues aspartate 326 and glycine 339 each contribute to the FAD site.

Belongs to the paxM FAD-dependent monooxygenase family. FAD is required as a cofactor.

The protein operates within secondary metabolite biosynthesis. Functionally, FAD-dependent monooxygenase; part of the gene cluster that mediates the biosynthesis of neosartoricin B, a prenylated anthracenone that probably exhibits T-cell antiproliferative activity, suggestive of a physiological role as an immunosuppressive agent. The non-reducing polyketide synthase nscA probably synthesizes and cyclizes the decaketide backbone. The hydrolase nscB then mediates the product release through hydrolysis followed by spontaneous decarboxylation. The prenyltransferase nscD catalyzes the addition of the dimethylallyl group to the aromatic C5. The FAD-dependent monooxygenase nscC is then responsible for the stereospecific hydroxylation at C2. Neosartoricin B can be converted into two additional compounds neosartoricins C and D. Neosartoricin C is a spirocyclic compound that is cyclized through the attack of C3 hydroxyl on C14, followed by dehydration. On the other hand, neosartoricin D is a further cyclized compound in which attack of C2 on C14 in neosartoricin C results in the formation of the acetal-containing dioxabicyclo-octanone ring. Both of these compounds are novel and possibly represent related metabolites of the gene cluster. The sequence is that of FAD-dependent monooxygenase nscC from Trichophyton verrucosum (strain HKI 0517).